The following is a 203-amino-acid chain: MSKRKASKYKIDRRLGENIWGRPKSSVNRRSYGPGQHGQRRKSKVSDFGIQLRAKQKLKGYYGDVTEKQFKRTYQEASKMKGDTGQNLIGLLEQRLDMVVYRAKFAPTIFSARQVVSHGHIYVNGVKCNIASRRVRPGDVVSLGKKAKEMALIAEAQALPEREVPDYVAADGDKVTFTRVPTLDEVPYPVKMEPNLVVEFYSR.

A disordered region spans residues 15–46 (LGENIWGRPKSSVNRRSYGPGQHGQRRKSKVS). Residues 94–154 (QRLDMVVYRA…KKAKEMALIA (61 aa)) form the S4 RNA-binding domain.

This sequence belongs to the universal ribosomal protein uS4 family. Part of the 30S ribosomal subunit. Contacts protein S5. The interaction surface between S4 and S5 is involved in control of translational fidelity.

One of the primary rRNA binding proteins, it binds directly to 16S rRNA where it nucleates assembly of the body of the 30S subunit. Its function is as follows. With S5 and S12 plays an important role in translational accuracy. This is Small ribosomal subunit protein uS4 from Novosphingobium aromaticivorans (strain ATCC 700278 / DSM 12444 / CCUG 56034 / CIP 105152 / NBRC 16084 / F199).